The chain runs to 695 residues: FMR1-interacting protein NUFIP2 (695 aa).

Residues 1-100 are disordered; that stretch reads MEEKPGQPQP…KTGYGELNGN (100 aa). Composition is skewed to basic residues over residues 11–23 and 30–53; these read QHHHSHHHPHHHP and PHHHHHYYFYNHSHNHHHHHHHQQ. Lys78 participates in a covalent cross-link: Glycyl lysine isopeptide (Lys-Gly) (interchain with G-Cter in SUMO2). Position 87 is a phosphothreonine (Thr87). A Glycyl lysine isopeptide (Lys-Gly) (interchain with G-Cter in SUMO2) cross-link involves residue Lys109. A phosphoserine mark is found at Ser112 and Ser113. Residues Lys136, Lys146, Lys157, and Lys171 each participate in a glycyl lysine isopeptide (Lys-Gly) (interchain with G-Cter in SUMO2) cross-link. Disordered regions lie at residues 155-189, 204-234, 261-341, and 369-402; these read IQKNSMDKKNGKSYENKSGENQSVDKSDTIPIPNG, GKGADNDGSGSESGYTTPKKRKARRNSAKGC, FKPD…KPPP, and TIQNSSVSPTSSSSSSSSTGETQTQSSSRLSQVP. Residues 159 to 182 show a composition bias toward basic and acidic residues; it reads SMDKKNGKSYENKSGENQSVDKSD. A phosphoserine mark is found at Ser212 and Ser214. Tyr218 carries the post-translational modification Phosphotyrosine. A phosphothreonine mark is found at Thr219 and Thr220. The segment covering 221 to 230 has biased composition (basic residues); sequence PKKRKARRNS. The segment covering 261 to 275 has biased composition (basic and acidic residues); it reads FKPDYSEQKGNRVDG. Residues Lys262 and Lys281 each participate in a glycyl lysine isopeptide (Lys-Gly) (interchain with G-Cter in SUMO2) cross-link. Arg291 carries the post-translational modification Omega-N-methylarginine. A Glycyl lysine isopeptide (Lys-Gly) (interchain with G-Cter in SUMO2) cross-link involves residue Lys293. A Phosphoserine modification is found at Ser304. A Glycyl lysine isopeptide (Lys-Gly) (interchain with G-Cter in SUMO2) cross-link involves residue Lys307. The segment covering 373–396 has biased composition (low complexity); that stretch reads SSVSPTSSSSSSSSTGETQTQSSS. Ser376 bears the Phosphoserine mark. Thr571 is modified (phosphothreonine). Residues Ser572, Ser592, Ser608, and Ser629 each carry the phosphoserine modification. Thr633 carries the post-translational modification Phosphothreonine. Phosphoserine is present on residues Ser637, Ser652, Ser655, and Ser692.

As to quaternary structure, interacts with FMR1 (via N-terminus). Interacts with DDX6.

It is found in the nucleus. It localises to the cytoplasm. Its subcellular location is the stress granule. Its function is as follows. Binds RNA. The chain is FMR1-interacting protein NUFIP2 from Homo sapiens (Human).